Here is a 1381-residue protein sequence, read N- to C-terminus: Contactin-associated protein 1 (1381 aa).

Residues 1–20 form the signal peptide; that stretch reads MMSLRLFSILLAAVVSGAQG. At 21-1284 the chain is on the extracellular side; it reads WGYYGCNEEL…PYYHDDGWIA (1264 aa). In terms of domain architecture, F5/8 type C spans 26-169; it reads CNEELVGPLY…IGLRLGIYGC (144 aa). An intrachain disulfide couples Cys26 to Cys169. Asn121, Asn129, and Asn277 each carry an N-linked (GlcNAc...) asparagine glycan. 2 consecutive Laminin G-like domains span residues 204–356 and 390–539; these read FKTE…AFRC and FRTW…FDTC. Cysteines 324 and 356 form a disulfide. Residues Asn421, Asn500, and Asn519 are each glycosylated (N-linked (GlcNAc...) asparagine). 4 cysteine pairs are disulfide-bonded: Cys507–Cys539, Cys545–Cys556, Cys550–Cys565, and Cys567–Cys577. An EGF-like 1 domain is found at 544 to 576; it reads RCSPNMCEHDGRCYQSWDDFICYCELTGYKGVT. The Fibrinogen C-terminal domain maps to 577 to 796; sequence CHEPLYKESC…NTISFRTGAA (220 aa). N-linked (GlcNAc...) asparagine glycosylation is found at Asn598, Asn654, Asn665, Asn764, Asn805, Asn844, Asn861, Asn949, and Asn957. The region spanning 814–958 is the Laminin G-like 3 domain; the sequence is FRTSAPSGVF…NASEGTFPNC (145 aa). 4 cysteine pairs are disulfide-bonded: Cys931-Cys958, Cys962-Cys975, Cys969-Cys984, and Cys986-Cys996. The EGF-like 2 domain maps to 962 to 996; it reads CTHPRFPCFHGGRCVERYSYYTCDCDLTAFDGPYC. N-linked (GlcNAc...) asparagine glycans are attached at residues Asn1079 and Asn1148. One can recognise a Laminin G-like 4 domain in the interval 1089 to 1251; sequence FSTSSAPAVL…VQGELSESNC (163 aa). The cysteines at positions 1210 and 1251 are disulfide-linked. Residues 1285-1305 form a helical membrane-spanning segment; sequence ILLGFLVAFLLLGLVGMLVLF. Topologically, residues 1306-1381 are cytoplasmic; the sequence is YLQNHRYKGS…PQILEESRSE (76 aa). Residues 1317–1381 form a disordered region; the sequence is HTNEPKATHD…PQILEESRSE (65 aa). Residues 1319–1329 are compositionally biased toward basic and acidic residues; that stretch reads NEPKATHDSHP. The SH3-binding signature appears at 1329–1366; the sequence is PGGKAPLPPSGPAQAPAPTPAPTQVPTPAPAPASGPGP. Residues 1334–1363 are compositionally biased toward pro residues; it reads PLPPSGPAQAPAPTPAPTQVPTPAPAPASG. Ser1380 is subject to Phosphoserine.

The protein belongs to the neurexin family. Interacts with CNTN1/contactin in cis form. As to expression, predominantly expressed in brain. In myelinated nerve fibers of the CNS predominantly found in paranodal axoglial junctions. In unmyelinated nerve fibers of the CNS diffusely distributed along the entire surface. Weak expression is detected in ovary, pancreas, colon, lung, heart, intestine and testis.

Its subcellular location is the membrane. It is found in the cell junction. The protein localises to the paranodal septate junction. Required, with CNTNAP2, for radial and longitudinal organization of myelinated axons. Plays a role in the formation of functional distinct domains critical for saltatory conduction of nerve impulses in myelinated nerve fibers. Demarcates the paranodal region of the axo-glial junction. In association with contactin involved in the signaling between axons and myelinating glial cells. The chain is Contactin-associated protein 1 (Cntnap1) from Rattus norvegicus (Rat).